Here is a 504-residue protein sequence, read N- to C-terminus: Maturase K (504 aa).

Belongs to the intron maturase 2 family. MatK subfamily.

It is found in the plastid. The protein resides in the chloroplast. Functionally, usually encoded in the trnK tRNA gene intron. Probably assists in splicing its own and other chloroplast group II introns. This chain is Maturase K, found in Kokia drynarioides (Hawaiian tree cotton).